An 81-amino-acid polypeptide reads, in one-letter code: UPF0180 protein YkuS (81 aa).

Belongs to the UPF0180 family.

The protein is UPF0180 protein YkuS (ykuS) of Bacillus subtilis (strain 168).